We begin with the raw amino-acid sequence, 224 residues long: tRNA (guanine-N(7)-)-methyltransferase (224 aa).

Glutamate 57, aspartate 82, and aspartate 109 together coordinate S-adenosyl-L-methionine. Aspartate 167 serves as a coordination point for substrate.

This sequence belongs to the class I-like SAM-binding methyltransferase superfamily. TrmB family.

The catalysed reaction is guanosine(46) in tRNA + S-adenosyl-L-methionine = N(7)-methylguanosine(46) in tRNA + S-adenosyl-L-homocysteine. It functions in the pathway tRNA modification; N(7)-methylguanine-tRNA biosynthesis. Catalyzes the formation of N(7)-methylguanine at position 46 (m7G46) in tRNA. In Chloroflexus aurantiacus (strain ATCC 29366 / DSM 635 / J-10-fl), this protein is tRNA (guanine-N(7)-)-methyltransferase.